A 219-amino-acid polypeptide reads, in one-letter code: Segregation and condensation protein B (219 aa).

Positions 193–219 (SLFAGGEEPSAEAADGGAGESTHGEEE) are disordered. A compositionally biased stretch (low complexity) spans 196 to 207 (AGGEEPSAEAAD).

It belongs to the ScpB family. As to quaternary structure, homodimer. Homodimerization may be required to stabilize the binding of ScpA to the Smc head domains. Component of a cohesin-like complex composed of ScpA, ScpB and the Smc homodimer, in which ScpA and ScpB bind to the head domain of Smc. The presence of the three proteins is required for the association of the complex with DNA.

Its subcellular location is the cytoplasm. Its function is as follows. Participates in chromosomal partition during cell division. May act via the formation of a condensin-like complex containing Smc and ScpA that pull DNA away from mid-cell into both cell halves. In Symbiobacterium thermophilum (strain DSM 24528 / JCM 14929 / IAM 14863 / T), this protein is Segregation and condensation protein B.